An 860-amino-acid chain; its full sequence is JmjC domain-containing histone demethylation protein 1 (860 aa).

Disordered regions lie at residues 1-45 (MSEQ…EEGK), 117-212 (STSP…PKRK), and 408-440 (DVKE…GGEI). Residues 23 to 116 (PEPCPLCRET…KWYCAPCLAR (94 aa)) form a PHD-type zinc finger. Basic and acidic residues-rich tracts occupy residues 183–192 (IDMKSEREQQ) and 408–433 (DVKE…HLTE). The JmjC domain maps to 416–579 (NDSREGSEIR…TQLRLRQIEI (164 aa)). Thr-471 provides a ligand contact to substrate. Residues His-474 and Asp-476 each coordinate Fe cation. Lys-491 is a binding site for substrate. His-547 provides a ligand contact to Fe cation. Disordered stretches follow at residues 744-795 (HPPA…ANEN) and 837-860 (GPKL…DIDH). Residues 750 to 763 (ENRQSPQIETTTVQ) are compositionally biased toward polar residues. Over residues 767–795 (PSTSSSDAISGSGPGASPGASANGGANEN) the composition is skewed to low complexity.

This sequence belongs to the JHDM1 histone demethylase family. Fe(2+) is required as a cofactor.

It localises to the nucleus. The enzyme catalyses N(6),N(6)-dimethyl-L-lysyl(36)-[histone H3] + 2 2-oxoglutarate + 2 O2 = L-lysyl(36)-[histone H3] + 2 formaldehyde + 2 succinate + 2 CO2. Functionally, histone demethylase that specifically demethylates 'Lys-36' of histone H3, thereby playing a central role in histone code. The protein is JmjC domain-containing histone demethylation protein 1 (JHD1) of Cryptococcus neoformans var. neoformans serotype D (strain JEC21 / ATCC MYA-565) (Filobasidiella neoformans).